The sequence spans 529 residues: MFS glucose transporter mfs1 (529 aa).

12 helical membrane-spanning segments follow: residues 7-27, 52-72, 86-106, 109-129, 138-158, 179-199, 272-292, 301-321, 330-350, 375-395, 415-439, and 446-464; these read VYFL…DISS, SITC…SFIA, ILWI…LLVV, VIAG…QAEI, VISL…FIQY, IPWG…FLFP, LQMW…VYIM, LLTA…AIIY, AILI…GLQG, AVGK…ATTI, AVSL…PLLW, and YMIF…FLTA.

This sequence belongs to the major facilitator superfamily. Sugar transporter (TC 2.A.1.1) family.

It localises to the membrane. Its function is as follows. Probable MFS glucose transporter; part of the gene cluster 27 that mediates the biosynthesis of asparasone A, a sclerotium-specific anthraquinone pigment important for sclerotial survival. This is MFS glucose transporter mfs1 from Aspergillus flavus (strain ATCC 200026 / FGSC A1120 / IAM 13836 / NRRL 3357 / JCM 12722 / SRRC 167).